A 457-amino-acid polypeptide reads, in one-letter code: Bifunctional protein GlmU (457 aa).

Positions 1–229 (MYNCAIILAA…YEEIMGVNSR (229 aa)) are pyrophosphorylase. UDP-N-acetyl-alpha-D-glucosamine-binding positions include 8–11 (LAAG), Lys-22, Gln-73, and 78–79 (GT). Asp-103 is a binding site for Mg(2+). Gly-140, Glu-155, Asn-170, and Asn-227 together coordinate UDP-N-acetyl-alpha-D-glucosamine. Asn-227 contacts Mg(2+). The interval 230–250 (VQLSEAEIVMRKRINHKHMVN) is linker. Positions 251-457 (GVTFIDCEST…WLDKKGLLKK (207 aa)) are N-acetyltransferase. Positions 332 and 350 each coordinate UDP-N-acetyl-alpha-D-glucosamine. His-362 acts as the Proton acceptor in catalysis. The UDP-N-acetyl-alpha-D-glucosamine site is built by Tyr-365 and Asn-376. Acetyl-CoA contacts are provided by residues 385-386 (NY), Ala-422, and Arg-439.

The protein in the N-terminal section; belongs to the N-acetylglucosamine-1-phosphate uridyltransferase family. This sequence in the C-terminal section; belongs to the transferase hexapeptide repeat family. Homotrimer. The cofactor is Mg(2+).

The protein localises to the cytoplasm. The enzyme catalyses alpha-D-glucosamine 1-phosphate + acetyl-CoA = N-acetyl-alpha-D-glucosamine 1-phosphate + CoA + H(+). The catalysed reaction is N-acetyl-alpha-D-glucosamine 1-phosphate + UTP + H(+) = UDP-N-acetyl-alpha-D-glucosamine + diphosphate. The protein operates within nucleotide-sugar biosynthesis; UDP-N-acetyl-alpha-D-glucosamine biosynthesis; N-acetyl-alpha-D-glucosamine 1-phosphate from alpha-D-glucosamine 6-phosphate (route II): step 2/2. It functions in the pathway nucleotide-sugar biosynthesis; UDP-N-acetyl-alpha-D-glucosamine biosynthesis; UDP-N-acetyl-alpha-D-glucosamine from N-acetyl-alpha-D-glucosamine 1-phosphate: step 1/1. It participates in bacterial outer membrane biogenesis; LPS lipid A biosynthesis. Catalyzes the last two sequential reactions in the de novo biosynthetic pathway for UDP-N-acetylglucosamine (UDP-GlcNAc). The C-terminal domain catalyzes the transfer of acetyl group from acetyl coenzyme A to glucosamine-1-phosphate (GlcN-1-P) to produce N-acetylglucosamine-1-phosphate (GlcNAc-1-P), which is converted into UDP-GlcNAc by the transfer of uridine 5-monophosphate (from uridine 5-triphosphate), a reaction catalyzed by the N-terminal domain. This Clostridium botulinum (strain 657 / Type Ba4) protein is Bifunctional protein GlmU.